The chain runs to 611 residues: MGNSHCVPQAPRRLRASFSRKPSLKGNREDSARMSAGLPGPEAARSGDAAANKLFHYIPGTDILDLENQRENLEQPFLSVFKKGRRRVPVRNLGKVVHYAKVQLRFQHSQDVSDCYLELFPAHLYFQAHGSEGLTFQGLLPLTELSVCPLEGSREHAFQITGPLPAPLLVLCPSRAELDRWLYHLEKQTALLGGPRRCHSAPPQRRLTRLRTASGHEPGGSAVCASRVKLQHLPAQEQWDRLLVLYPTSLAIFSEELDGLCFKGELPLRAVHINLEEKEKQIRSFLIEGPLINTIRVVCASYEDYGHWLLCLRAVTHREGAPPLPGAESFPGSQVMGSGRGSLSSGGQTSWDSGCLAPPSTRTSHSLPESSVPSTVGCSSQHTPDQANSDRASIGRRRTELRRSGSSRSPGSKARAEGRGPVTPLHLDLTQLHRLSLESSPDAPDHTSETSHSPLYADPYTPPATSHRRVTDVRGLEEFLSAMQSARGPTPSSPLPSVPVSVPASDPRSCSSGPAGPYLLSKKGALQSRAAQRHRGSAKDGGPQPPDAPQLVSSAREGSPEPWLPLTDGRSPRRSRDPGYDHLWDETLSSSHQKCPQLGGPEASGGLVQWI.

Residues 1–45 (MGNSHCVPQAPRRLRASFSRKPSLKGNREDSARMSAGLPGPEAAR) form a disordered region. Glycine 2 is lipidated: N-myristoyl glycine. An interaction with C1QBP region spans residues 61-100 (TDILDLENQRENLEQPFLSVFKKGRRRVPVRNLGKVVHYA). PH domains follow at residues 96-192 (VVHY…TALL) and 222-319 (AVCA…THRE). Phosphotyrosine is present on tyrosine 302. 3 disordered regions span residues 323 to 424 (PLPG…PVTP), 438 to 468 (ESSP…TSHR), and 483 to 611 (MQSA…VQWI). A compositionally biased stretch (low complexity) spans 341–350 (GSLSSGGQTS). A compositionally biased stretch (polar residues) spans 360–391 (STRTSHSLPESSVPSTVGCSSQHTPDQANSDR). A Phosphotyrosine modification is found at tyrosine 456. Residues 498 to 509 (VPVSVPASDPRS) show a composition bias toward low complexity. A Phosphoserine modification is found at serine 559. A compositionally biased stretch (basic and acidic residues) spans 570-585 (RSPRRSRDPGYDHLWD).

As to quaternary structure, found in a complex with cytochrome c mRNA and various ribosomal proteins. Interacts with C1QBP. Interacts with ELAVL1. Interacts with BID. Post-translationally, phosphorylation is essential for its mitochondrial localization and regulates its interaction with C1QBP. In terms of tissue distribution, ubiquitous. Epressed in several cancer cell lines of differing origin.

Its subcellular location is the cell membrane. The protein localises to the mitochondrion. It localises to the mitochondrion membrane. Its function is as follows. Controls the stability of the leptin mRNA harboring an AU-rich element (ARE) in its 3' UTR, in cooperation with the RNA stabilizer ELAVL1. Decreases the stability of the leptin mRNA by antagonizing the function of ELAVL1 by inducing its atypical recruitment from the nucleus to the cytosol. Binds to cardiolipin (CL), phosphatidic acid (PA), phosphatidylinositol 4-phosphate (PtdIns(4)P) and phosphatidylserine (PS). Promotes apoptosis by enhancing BAX-BAK hetero-oligomerization via interaction with BID in colon cancer cells. The polypeptide is Pleckstrin homology domain-containing family N member 1 (PLEKHN1) (Homo sapiens (Human)).